A 147-amino-acid chain; its full sequence is Prefoldin subunit alpha (147 aa).

This sequence belongs to the prefoldin alpha subunit family. In terms of assembly, heterohexamer of two alpha and four beta subunits.

It localises to the cytoplasm. In terms of biological role, molecular chaperone capable of stabilizing a range of proteins. Seems to fulfill an ATP-independent, HSP70-like function in archaeal de novo protein folding. The protein is Prefoldin subunit alpha of Saccharolobus islandicus (strain Y.N.15.51 / Yellowstone #2) (Sulfolobus islandicus).